A 501-amino-acid polypeptide reads, in one-letter code: Probable histidine--tRNA ligase, mitochondrial (501 aa).

Residues 32-54 are disordered; that stretch reads TNSNNNNNNNNNNNNNNNNNKNI. Low complexity predominate over residues 33–54; sequence NSNNNNNNNNNNNNNNNNNKNI.

The protein belongs to the class-II aminoacyl-tRNA synthetase family.

It is found in the mitochondrion matrix. The catalysed reaction is tRNA(His) + L-histidine + ATP = L-histidyl-tRNA(His) + AMP + diphosphate + H(+). The polypeptide is Probable histidine--tRNA ligase, mitochondrial (mhisS) (Dictyostelium discoideum (Social amoeba)).